The chain runs to 961 residues: Glycine dehydrogenase (decarboxylating) (961 aa).

K709 carries the N6-(pyridoxal phosphate)lysine modification.

This sequence belongs to the GcvP family. As to quaternary structure, the glycine cleavage system is composed of four proteins: P, T, L and H. Pyridoxal 5'-phosphate is required as a cofactor.

It carries out the reaction N(6)-[(R)-lipoyl]-L-lysyl-[glycine-cleavage complex H protein] + glycine + H(+) = N(6)-[(R)-S(8)-aminomethyldihydrolipoyl]-L-lysyl-[glycine-cleavage complex H protein] + CO2. Its function is as follows. The glycine cleavage system catalyzes the degradation of glycine. The P protein binds the alpha-amino group of glycine through its pyridoxal phosphate cofactor; CO(2) is released and the remaining methylamine moiety is then transferred to the lipoamide cofactor of the H protein. The protein is Glycine dehydrogenase (decarboxylating) of Streptomyces griseus subsp. griseus (strain JCM 4626 / CBS 651.72 / NBRC 13350 / KCC S-0626 / ISP 5235).